A 525-amino-acid polypeptide reads, in one-letter code: Peptide chain release factor 3 (525 aa).

One can recognise a tr-type G domain in the interval 9–276 (AKRRTFAIIS…GFTRYAPAPQ (268 aa)). GTP-binding positions include 18 to 25 (SHPDAGKT), 86 to 90 (DTPGH), and 140 to 143 (NKFD).

This sequence belongs to the TRAFAC class translation factor GTPase superfamily. Classic translation factor GTPase family. PrfC subfamily.

It is found in the cytoplasm. Its function is as follows. Increases the formation of ribosomal termination complexes and stimulates activities of RF-1 and RF-2. It binds guanine nucleotides and has strong preference for UGA stop codons. It may interact directly with the ribosome. The stimulation of RF-1 and RF-2 is significantly reduced by GTP and GDP, but not by GMP. The polypeptide is Peptide chain release factor 3 (Francisella tularensis subsp. tularensis (strain FSC 198)).